A 122-amino-acid chain; its full sequence is Small ribosomal subunit protein uS13 (122 aa).

A disordered region spans residues Leu96 to Lys122. The segment covering Gln101–Lys122 has biased composition (basic residues).

This sequence belongs to the universal ribosomal protein uS13 family. In terms of assembly, part of the 30S ribosomal subunit. Forms a loose heterodimer with protein S19. Forms two bridges to the 50S subunit in the 70S ribosome.

In terms of biological role, located at the top of the head of the 30S subunit, it contacts several helices of the 16S rRNA. In the 70S ribosome it contacts the 23S rRNA (bridge B1a) and protein L5 of the 50S subunit (bridge B1b), connecting the 2 subunits; these bridges are implicated in subunit movement. Contacts the tRNAs in the A and P-sites. In Chlamydia trachomatis serovar L2 (strain ATCC VR-902B / DSM 19102 / 434/Bu), this protein is Small ribosomal subunit protein uS13.